The chain runs to 430 residues: Enolase (430 aa).

Residue Gln-167 coordinates (2R)-2-phosphoglycerate. Glu-209 serves as the catalytic Proton donor. Residues Asp-246, Glu-287, and Asp-314 each contribute to the Mg(2+) site. (2R)-2-phosphoglycerate is bound by residues Lys-339, Arg-368, Ser-369, and Lys-390. Lys-339 serves as the catalytic Proton acceptor.

This sequence belongs to the enolase family. The cofactor is Mg(2+).

The protein resides in the cytoplasm. It localises to the secreted. The protein localises to the cell surface. It catalyses the reaction (2R)-2-phosphoglycerate = phosphoenolpyruvate + H2O. It participates in carbohydrate degradation; glycolysis; pyruvate from D-glyceraldehyde 3-phosphate: step 4/5. Functionally, catalyzes the reversible conversion of 2-phosphoglycerate (2-PG) into phosphoenolpyruvate (PEP). It is essential for the degradation of carbohydrates via glycolysis. The chain is Enolase from Prochlorococcus marinus (strain MIT 9515).